The following is a 125-amino-acid chain: uncharacterized protein (125 aa).

Positions 45-110 constitute a Cupin type-2 domain; it reads IVPVGSKTLL…IGNVPLKILC (66 aa).

This is an uncharacterized protein from Methanocaldococcus jannaschii (strain ATCC 43067 / DSM 2661 / JAL-1 / JCM 10045 / NBRC 100440) (Methanococcus jannaschii).